The chain runs to 305 residues: Phospho-N-acetylmuramoyl-pentapeptide-transferase (305 aa).

9 consecutive transmembrane segments (helical) span residues 1 to 21 (MLMV…RASK), 46 to 66 (AGGV…YLSG), 73 to 93 (ELLI…DDWL), 113 to 133 (FPLQ…LASH), 139 to 159 (LGPV…VNAF), 174 to 194 (IIVL…VAVL), 207 to 227 (VFMG…AYIL), 233 to 253 (LLPI…IQVI), and 282 to 302 (VTIR…WLLG).

Belongs to the glycosyltransferase 4 family. MraY subfamily. The cofactor is Mg(2+).

It is found in the cell membrane. It catalyses the reaction UDP-N-acetyl-alpha-D-muramoyl-L-alanyl-gamma-D-glutamyl-meso-2,6-diaminopimeloyl-D-alanyl-D-alanine + di-trans,octa-cis-undecaprenyl phosphate = di-trans,octa-cis-undecaprenyl diphospho-N-acetyl-alpha-D-muramoyl-L-alanyl-D-glutamyl-meso-2,6-diaminopimeloyl-D-alanyl-D-alanine + UMP. Its pathway is cell wall biogenesis; peptidoglycan biosynthesis. Catalyzes the initial step of the lipid cycle reactions in the biosynthesis of the cell wall peptidoglycan: transfers peptidoglycan precursor phospho-MurNAc-pentapeptide from UDP-MurNAc-pentapeptide onto the lipid carrier undecaprenyl phosphate, yielding undecaprenyl-pyrophosphoryl-MurNAc-pentapeptide, known as lipid I. The sequence is that of Phospho-N-acetylmuramoyl-pentapeptide-transferase from Deinococcus deserti (strain DSM 17065 / CIP 109153 / LMG 22923 / VCD115).